A 184-amino-acid polypeptide reads, in one-letter code: Putative DNA-directed RNA polymerase subunit 454R (184 aa).

This sequence belongs to the archaeal Rpo5/eukaryotic RPB5 RNA polymerase subunit family.

In terms of biological role, component of the DNA-dependent RNA polymerase that catalyzes the transcription in the cytoplasm of viral DNA into RNA using the four ribonucleoside triphosphates as substrates. This chain is Putative DNA-directed RNA polymerase subunit 454R, found in Invertebrate iridescent virus 6 (IIV-6).